The primary structure comprises 446 residues: Ubiquitin carboxyl-terminal hydrolase MINDY-3 (446 aa).

Cysteine 51 serves as the catalytic Nucleophile. A compositionally biased stretch (basic and acidic residues) spans 117–128 (DNSDITDSHPEP). The disordered stretch occupies residues 117–137 (DNSDITDSHPEPESSQPTDTP). Histidine 288 serves as the catalytic Proton acceptor.

This sequence belongs to the MINDY deubiquitinase family. FAM188 subfamily.

The protein localises to the nucleus. The catalysed reaction is Thiol-dependent hydrolysis of ester, thioester, amide, peptide and isopeptide bonds formed by the C-terminal Gly of ubiquitin (a 76-residue protein attached to proteins as an intracellular targeting signal).. Hydrolase that can remove 'Lys-48'-linked conjugated ubiquitin from proteins. The chain is Ubiquitin carboxyl-terminal hydrolase MINDY-3 (mindy3) from Danio rerio (Zebrafish).